The sequence spans 518 residues: Anthranilate synthase component 1 (518 aa).

Residues Ser41 and 291–293 (PYM) each bind L-tryptophan. 328–329 (GS) contributes to the chorismate binding site. Glu361 is a binding site for Mg(2+). Chorismate contacts are provided by residues Tyr449, Arg469, 483–485 (GCG), and Gly485. Glu498 serves as a coordination point for Mg(2+).

The protein belongs to the anthranilate synthase component I family. In terms of assembly, heterotetramer consisting of two non-identical subunits: a beta subunit (TrpG) and a large alpha subunit (TrpE). It depends on Mg(2+) as a cofactor.

It carries out the reaction chorismate + L-glutamine = anthranilate + pyruvate + L-glutamate + H(+). The protein operates within amino-acid biosynthesis; L-tryptophan biosynthesis; L-tryptophan from chorismate: step 1/5. Feedback inhibited by tryptophan. Part of a heterotetrameric complex that catalyzes the two-step biosynthesis of anthranilate, an intermediate in the biosynthesis of L-tryptophan. In the first step, the glutamine-binding beta subunit (TrpG) of anthranilate synthase (AS) provides the glutamine amidotransferase activity which generates ammonia as a substrate that, along with chorismate, is used in the second step, catalyzed by the large alpha subunit of AS (TrpE) to produce anthranilate. In the absence of TrpG, TrpE can synthesize anthranilate directly from chorismate and high concentrations of ammonia. The polypeptide is Anthranilate synthase component 1 (trpE) (Haemophilus influenzae (strain ATCC 51907 / DSM 11121 / KW20 / Rd)).